The primary structure comprises 1377 residues: DNA-directed RNA polymerase subunit beta' (1377 aa).

Zn(2+) is bound by residues C60, C62, C75, and C78. The Mg(2+) site is built by D449, D451, and D453. Zn(2+) is bound by residues C777, C851, C858, and C861.

Belongs to the RNA polymerase beta' chain family. The RNAP catalytic core consists of 2 alpha, 1 beta, 1 beta' and 1 omega subunit. When a sigma factor is associated with the core the holoenzyme is formed, which can initiate transcription. Mg(2+) is required as a cofactor. Zn(2+) serves as cofactor.

The enzyme catalyses RNA(n) + a ribonucleoside 5'-triphosphate = RNA(n+1) + diphosphate. Functionally, DNA-dependent RNA polymerase catalyzes the transcription of DNA into RNA using the four ribonucleoside triphosphates as substrates. This is DNA-directed RNA polymerase subunit beta' from Borreliella burgdorferi (strain ATCC 35210 / DSM 4680 / CIP 102532 / B31) (Borrelia burgdorferi).